The following is a 142-amino-acid chain: SLSTKDKETVKAFWSKVSGKTEDIGNDALSRMLVVYPQTKIYFSHWKELTPGSAPVRKHGMTVMKGVGDAVSKIEDLTAGLTELSELHAFTLRVDPGNFKILSHNILVVFAIMFPNDFTPQVHVSMDKFLAALSRALSEKYR.

At Ser-1 the chain carries N-acetylserine. The Globin domain occupies 1 to 142 (SLSTKDKETV…LSRALSEKYR (142 aa)). Position 59 (His-59) interacts with O2. Heme b is bound at residue His-88.

This sequence belongs to the globin family. In terms of assembly, hb2 is a heterotetramer of two alpha-2 chains and two beta chains. As to expression, red blood cells.

Involved in oxygen transport from gills to the various peripheral tissues. The protein is Hemoglobin subunit alpha-2 (hba2) of Trematomus newnesi (Dusky notothen).